The sequence spans 494 residues: Ketol-acid reductoisomerase (NADP(+)) (494 aa).

The KARI N-terminal Rossmann domain maps to 14-208 (LDQLGRCRFM…GGHRAGCLES (195 aa)). NADP(+) is bound by residues 45-48 (CGAQ), Arg68, Arg76, Ser78, and 108-110 (DKQ). Residue His132 is part of the active site. Gly158 contacts NADP(+). 2 consecutive KARI C-terminal knotted domains span residues 209–344 (SFVA…NYPE) and 345–487 (SDVE…MSDM). The Mg(2+) site is built by Asp217, Glu221, Glu389, and Glu393. Position 414 (Ser414) interacts with substrate.

Belongs to the ketol-acid reductoisomerase family. Mg(2+) is required as a cofactor.

It carries out the reaction (2R)-2,3-dihydroxy-3-methylbutanoate + NADP(+) = (2S)-2-acetolactate + NADPH + H(+). The catalysed reaction is (2R,3R)-2,3-dihydroxy-3-methylpentanoate + NADP(+) = (S)-2-ethyl-2-hydroxy-3-oxobutanoate + NADPH + H(+). The protein operates within amino-acid biosynthesis; L-isoleucine biosynthesis; L-isoleucine from 2-oxobutanoate: step 2/4. It participates in amino-acid biosynthesis; L-valine biosynthesis; L-valine from pyruvate: step 2/4. Its function is as follows. Involved in the biosynthesis of branched-chain amino acids (BCAA). Catalyzes an alkyl-migration followed by a ketol-acid reduction of (S)-2-acetolactate (S2AL) to yield (R)-2,3-dihydroxy-isovalerate. In the isomerase reaction, S2AL is rearranged via a Mg-dependent methyl migration to produce 3-hydroxy-3-methyl-2-ketobutyrate (HMKB). In the reductase reaction, this 2-ketoacid undergoes a metal-dependent reduction by NADPH to yield (R)-2,3-dihydroxy-isovalerate. The chain is Ketol-acid reductoisomerase (NADP(+)) from Aliivibrio fischeri (strain ATCC 700601 / ES114) (Vibrio fischeri).